The following is a 228-amino-acid chain: Orotidine 5'-phosphate decarboxylase (228 aa).

Substrate contacts are provided by residues D11, K33, 60-69, T117, R178, Q186, G206, and R207; that span reads DLKLHDIPNT. The active-site Proton donor is K62.

Belongs to the OMP decarboxylase family. Type 1 subfamily. In terms of assembly, homodimer.

It catalyses the reaction orotidine 5'-phosphate + H(+) = UMP + CO2. It participates in pyrimidine metabolism; UMP biosynthesis via de novo pathway; UMP from orotate: step 2/2. Its function is as follows. Catalyzes the decarboxylation of orotidine 5'-monophosphate (OMP) to uridine 5'-monophosphate (UMP). The polypeptide is Orotidine 5'-phosphate decarboxylase (Ehrlichia canis (strain Jake)).